The sequence spans 809 residues: Protein TRC8 homolog (809 aa).

11 helical membrane passes run 124–144 (TVKF…FMLW), 147–167 (HLVM…SYWS), 200–220 (VMSL…FAYI), 233–253 (MPII…AKVV), 256–276 (LPVV…MQSA), 350–370 (LVDG…ISMF), 392–412 (LGTV…LTSL), 425–445 (LCLL…PILM), 461–481 (ALSV…HLWS), 488–508 (WLLA…VSLA), and 539–559 (SVEF…LIFE). The RING-type; atypical zinc finger occupies 621–659 (CAICYQEMYSAKITRCRHFFHGVCLRKWLYVQDRCPLCH). Disordered stretches follow at residues 696-724 (NNAA…SSSA) and 752-788 (VASS…TSAA). Low complexity predominate over residues 711-724 (EASEQAPATSSSSA).

In terms of assembly, interacts with VHL. Interacts with the MPN domain of CSN5. Interacts with EIF3F and EIF3H.

The protein resides in the endoplasmic reticulum membrane. In terms of biological role, plays a role in growth inhibition that is dependent upon COP9 signalosome subunits CSN5 and CSN6. May modulate signalosome levels or compartmentalization. Probably functions in the same or a related pathway to VHL during early midline development. This is Protein TRC8 homolog from Drosophila melanogaster (Fruit fly).